Reading from the N-terminus, the 358-residue chain is Very long chain fatty acid elongase AAEL008004 (358 aa).

7 helical membrane passes run 26–46 (WPLMSSPFPTLALCLGYVYLV), 66–86 (LILYNFVQVVFSAWLFYEIGI), 115–135 (ACWWYYFSKFTEFFDTFFFVM), 147–167 (VIHHGCMPMSVWFGVKFTPGG), 171–191 (FFGLLNTFVHIVMYTYYLFTA), 207–227 (TSLQMVQFVAIMVHAFQLLFI), and 234–254 (AFVWWIGMHAVMFLFLFNEFY). Residues 285–295 (SAVSSNGSAIT) are compositionally biased toward polar residues. Positions 285-322 (SAVSSNGSAITANGHHGKNGSVHHHSNGSATSNGTSLL) are disordered. Basic residues predominate over residues 299-310 (HHGKNGSVHHHS). Positions 311 to 322 (NGSATSNGTSLL) are enriched in polar residues.

It belongs to the ELO family.

The protein resides in the membrane. It carries out the reaction a very-long-chain acyl-CoA + malonyl-CoA + H(+) = a very-long-chain 3-oxoacyl-CoA + CO2 + CoA. Could be implicated in synthesis of very long chain fatty acids. The polypeptide is Very long chain fatty acid elongase AAEL008004 (Aedes aegypti (Yellowfever mosquito)).